A 332-amino-acid polypeptide reads, in one-letter code: Glycerol-3-phosphate dehydrogenase [NAD(P)+] (332 aa).

NADPH-binding residues include Trp-11, Arg-30, and Lys-108. The sn-glycerol 3-phosphate site is built by Lys-108, Gly-137, and Ser-139. An NADPH-binding site is contributed by Ala-141. Lys-192, Asp-245, Ser-255, Arg-256, and Asn-257 together coordinate sn-glycerol 3-phosphate. Lys-192 functions as the Proton acceptor in the catalytic mechanism. Position 256 (Arg-256) interacts with NADPH. Residues Val-280 and Glu-282 each coordinate NADPH.

It belongs to the NAD-dependent glycerol-3-phosphate dehydrogenase family.

The protein resides in the cytoplasm. The catalysed reaction is sn-glycerol 3-phosphate + NAD(+) = dihydroxyacetone phosphate + NADH + H(+). It carries out the reaction sn-glycerol 3-phosphate + NADP(+) = dihydroxyacetone phosphate + NADPH + H(+). The protein operates within membrane lipid metabolism; glycerophospholipid metabolism. In terms of biological role, catalyzes the reduction of the glycolytic intermediate dihydroxyacetone phosphate (DHAP) to sn-glycerol 3-phosphate (G3P), the key precursor for phospholipid synthesis. The sequence is that of Glycerol-3-phosphate dehydrogenase [NAD(P)+] from Burkholderia vietnamiensis (strain G4 / LMG 22486) (Burkholderia cepacia (strain R1808)).